Reading from the N-terminus, the 139-residue chain is Small ribosomal subunit protein uS12 (139 aa).

Disordered stretches follow at residues 1 to 22 (MPTI…SKSP) and 37 to 57 (KTPS…TPKK). Positions 9-19 (RKGRKSHKGKS) are enriched in basic residues. 3-methylthioaspartic acid is present on Asp-102.

The protein belongs to the universal ribosomal protein uS12 family. In terms of assembly, part of the 30S ribosomal subunit. Contacts proteins S8 and S17. May interact with IF1 in the 30S initiation complex.

Functionally, with S4 and S5 plays an important role in translational accuracy. Its function is as follows. Interacts with and stabilizes bases of the 16S rRNA that are involved in tRNA selection in the A site and with the mRNA backbone. Located at the interface of the 30S and 50S subunits, it traverses the body of the 30S subunit contacting proteins on the other side and probably holding the rRNA structure together. The combined cluster of proteins S8, S12 and S17 appears to hold together the shoulder and platform of the 30S subunit. This Limosilactobacillus reuteri (strain DSM 20016) (Lactobacillus reuteri) protein is Small ribosomal subunit protein uS12.